A 110-amino-acid polypeptide reads, in one-letter code: Large ribosomal subunit protein uL22 (110 aa).

It belongs to the universal ribosomal protein uL22 family. In terms of assembly, part of the 50S ribosomal subunit.

In terms of biological role, this protein binds specifically to 23S rRNA; its binding is stimulated by other ribosomal proteins, e.g. L4, L17, and L20. It is important during the early stages of 50S assembly. It makes multiple contacts with different domains of the 23S rRNA in the assembled 50S subunit and ribosome. Functionally, the globular domain of the protein is located near the polypeptide exit tunnel on the outside of the subunit, while an extended beta-hairpin is found that lines the wall of the exit tunnel in the center of the 70S ribosome. This Nitrosomonas europaea (strain ATCC 19718 / CIP 103999 / KCTC 2705 / NBRC 14298) protein is Large ribosomal subunit protein uL22.